The sequence spans 67 residues: Conotoxin VnMMSK-02 (67 aa).

The N-terminal stretch at 1–20 (MMSKLGALLTICLLLFPLTA) is a signal peptide. A propeptide spanning residues 21 to 52 (LPLDGDQPADRPAERMQDDISSEQHPLFDKER) is cleaved from the precursor. Gln-53 is modified (pyrrolidone carboxylic acid). 3 cysteine pairs are disulfide-bonded: Cys-54–Cys-66, Cys-55–Cys-62, and Cys-59–Cys-65. Pro-64 carries the 4-hydroxyproline modification. Position 66 is a cysteine amide (Cys-66).

This sequence belongs to the conotoxin M superfamily. Expressed by the venom duct.

It localises to the secreted. The polypeptide is Conotoxin VnMMSK-02 (Conus ventricosus (Mediterranean cone)).